Here is a 143-residue protein sequence, read N- to C-terminus: Period circadian protein (143 aa).

The segment at 25 to 130 (NSKPVTAPTQ…GPSLAADNSI (106 aa)) is disordered. Low complexity-rich tracts occupy residues 71–93 (SGNC…ITGT) and 114–126 (GGAA…SLAA).

As to quaternary structure, forms a heterodimer with timeless (TIM); the complex then translocates into the nucleus. Post-translationally, phosphorylated with a circadian rhythmicity, probably by the double-time protein (dbt). Phosphorylation could be implicated in the stability of per monomer and in the formation of heterodimer per-tim.

Its subcellular location is the nucleus. The protein localises to the cytoplasm. It localises to the perinuclear region. Its function is as follows. Essential for biological clock functions. Determines the period length of circadian and ultradian rhythms; an increase in PER dosage leads to shortened circadian rhythms and a decrease leads to lengthened circadian rhythms. Essential for the circadian rhythmicity of locomotor activity, eclosion behavior, and for the rhythmic component of the male courtship song that originates in the thoracic nervous system. The biological cycle depends on the rhythmic formation and nuclear localization of the TIM-PER complex. Light induces the degradation of TIM, which promotes elimination of PER. Nuclear activity of the heterodimer coordinatively regulates PER and TIM transcription through a negative feedback loop. Behaves as a negative element in circadian transcriptional loop. Does not appear to bind DNA, suggesting indirect transcriptional inhibition. The polypeptide is Period circadian protein (per) (Drosophila picticornis (Fruit fly)).